The following is a 486-amino-acid chain: N-succinylglutamate 5-semialdehyde dehydrogenase (486 aa).

Residue 220 to 225 coordinates NAD(+); sequence GSSRTG. Catalysis depends on residues Glu243 and Cys277.

Belongs to the aldehyde dehydrogenase family. AstD subfamily.

The catalysed reaction is N-succinyl-L-glutamate 5-semialdehyde + NAD(+) + H2O = N-succinyl-L-glutamate + NADH + 2 H(+). Its pathway is amino-acid degradation; L-arginine degradation via AST pathway; L-glutamate and succinate from L-arginine: step 4/5. Functionally, catalyzes the NAD-dependent reduction of succinylglutamate semialdehyde into succinylglutamate. The protein is N-succinylglutamate 5-semialdehyde dehydrogenase of Shewanella baltica (strain OS223).